Here is a 314-residue protein sequence, read N- to C-terminus: Hydroxyacyl-coenzyme A dehydrogenase, mitochondrial (314 aa).

The N-terminal 12 residues, 1–12 (MAFVTRQFLRSM), are a transit peptide targeting the mitochondrion. Residues 34–39 (GGGLMG) and Asp57 each bind NAD(+). Residue Ser73 coordinates CoA. An N6-acetyllysine modification is found at Lys75. Lys80 provides a ligand contact to CoA. Lys80 is subject to N6-succinyllysine. An N6-acetyllysine; alternate mark is found at Lys81 and Lys87. N6-succinyllysine; alternate is present on residues Lys81 and Lys87. Glu122 provides a ligand contact to NAD(+). Residue Lys125 is modified to N6-acetyllysine. Lys127 is a binding site for NAD(+). Lys127 is modified (N6-(2-hydroxyisobutyryl)lysine). An N6-acetyllysine; alternate modification is found at Lys136. N6-succinyllysine; alternate is present on Lys136. The NAD(+) site is built by Ser149 and Asn173. Ser149 serves as a coordination point for CoA. Residue Lys179 is modified to N6-acetyllysine. N6-acetyllysine; alternate occurs at positions 185, 192, and 202. Residues Lys185, Lys192, and Lys202 each carry the N6-succinyllysine; alternate modification. The residue at position 206 (Lys206) is an N6-succinyllysine. An N6-acetyllysine; alternate mark is found at Lys212 and Lys241. Lys212 and Lys241 each carry N6-succinyllysine; alternate. Residue Lys305 coordinates NAD(+). Lys312 is modified (N6-acetyllysine; alternate). Lys312 carries the post-translational modification N6-succinyllysine; alternate.

Belongs to the 3-hydroxyacyl-CoA dehydrogenase family. Homodimer. Interacts with GLUD1; this interaction inhibits the activation of glutamate dehydrogenase 1 (GLUD1). In terms of processing, succinylation at Lys-81, adjacent to a coenzyme A binding site. Desuccinylated by SIRT5. As to expression, expressed in liver, kidney, brain, and pancreatic islets.

The protein localises to the mitochondrion matrix. It localises to the nucleus. The protein resides in the cytoplasm. It is found in the cytosol. The catalysed reaction is a (3S)-3-hydroxyacyl-CoA + NAD(+) = a 3-oxoacyl-CoA + NADH + H(+). The enzyme catalyses (3S)-3-hydroxybutanoyl-CoA + NAD(+) = acetoacetyl-CoA + NADH + H(+). It carries out the reaction (3S)-hydroxydecanoyl-CoA + NAD(+) = 3-oxodecanoyl-CoA + NADH + H(+). It catalyses the reaction (3S)-hydroxyhexadecanoyl-CoA + NAD(+) = 3-oxohexadecanoyl-CoA + NADH + H(+). The protein operates within lipid metabolism; fatty acid beta-oxidation. In terms of biological role, mitochondrial fatty acid beta-oxidation enzyme that catalyzes the third step of the beta-oxidation cycle for medium and short-chain 3-hydroxy fatty acyl-CoAs (C4 to C10). Plays a role in the control of insulin secretion by inhibiting the activation of glutamate dehydrogenase 1 (GLUD1), an enzyme that has an important role in regulating amino acid-induced insulin secretion. Plays a role in the maintenance of normal spermatogenesis through the reduction of fatty acid accumulation in the testes. Inhibits cell proliferation. The protein is Hydroxyacyl-coenzyme A dehydrogenase, mitochondrial (Hadh) of Mus musculus (Mouse).